The chain runs to 854 residues: Lysine-specific demethylase 3 (854 aa).

The tract at residues 64–88 (QRVQQEEESLGQVPPLTEEEQQRHD) is disordered. Residues 601-806 (LRTGNLNIAS…HCYHLTHEFR (206 aa)) enclose the JmjC domain. Residues H643, D645, and H774 each coordinate Fe cation.

The protein belongs to the JHDM2-like histone demethylase family. Fe(2+) serves as cofactor. In terms of tissue distribution, expressed in neurons close to the dorsal lateral neurons involved in circadian rhythm.

It is found in the nucleus. It localises to the cytoplasm. It catalyses the reaction N(6),N(6)-dimethyl-L-lysyl(9)-[histone H3] + 2 2-oxoglutarate + 2 O2 = L-lysyl(9)-[histone H3] + 2 formaldehyde + 2 succinate + 2 CO2. Its function is as follows. Histone demethylase that specifically demethylates 'Lys-10' of histone H3 (H3K9), thereby playing a central role in histone code. Demethylation of Lys residue generates formaldehyde and succinate. Probably involved in regulation of chromatin structure, promoting expansion of euchromatin. Negatively regulates rhino-dependent piRNA production capacity of several genomic regions; may help define the frontiers of piRNA clusters by regulating histone methylation levels. May be involved in regulation of behavior and circadian rhythms. The protein is Lysine-specific demethylase 3 of Drosophila melanogaster (Fruit fly).